A 469-amino-acid chain; its full sequence is ATP synthase subunit beta (469 aa).

Residue 155 to 162 participates in ATP binding; the sequence is GGAGCGKT.

Belongs to the ATPase alpha/beta chains family. F-type ATPases have 2 components, CF(1) - the catalytic core - and CF(0) - the membrane proton channel. CF(1) has five subunits: alpha(3), beta(3), gamma(1), delta(1), epsilon(1). CF(0) has three main subunits: a(1), b(2) and c(9-12). The alpha and beta chains form an alternating ring which encloses part of the gamma chain. CF(1) is attached to CF(0) by a central stalk formed by the gamma and epsilon chains, while a peripheral stalk is formed by the delta and b chains.

Its subcellular location is the cell inner membrane. The catalysed reaction is ATP + H2O + 4 H(+)(in) = ADP + phosphate + 5 H(+)(out). Produces ATP from ADP in the presence of a proton gradient across the membrane. The catalytic sites are hosted primarily by the beta subunits. The polypeptide is ATP synthase subunit beta (Syntrophus aciditrophicus (strain SB)).